Consider the following 348-residue polypeptide: Ion-translocating oxidoreductase complex subunit D (348 aa).

Helical transmembrane passes span isoleucine 25 to isoleucine 45, proline 68 to alanine 88, and alanine 124 to alanine 144. Residue threonine 182 is modified to FMN phosphoryl threonine. Helical transmembrane passes span threonine 211–alanine 231, tryptophan 237–alanine 257, alanine 263–threonine 283, leucine 296–proline 316, and aspartate 317–isoleucine 337.

Belongs to the NqrB/RnfD family. The complex is composed of six subunits: RnfA, RnfB, RnfC, RnfD, RnfE and RnfG. The cofactor is FMN.

The protein resides in the cell inner membrane. In terms of biological role, part of a membrane-bound complex that couples electron transfer with translocation of ions across the membrane. The polypeptide is Ion-translocating oxidoreductase complex subunit D (Shewanella amazonensis (strain ATCC BAA-1098 / SB2B)).